Reading from the N-terminus, the 83-residue chain is MKTLLLTLVVVTVVCLDLGYTRRCYNQQSSQPKTTKSCPPGENSCYNKQWRDHRGSITERGCGCPTVKPGIKLRCCESEDCNN.

Residues 1–21 (MKTLLLTLVVVTVVCLDLGYT) form the signal peptide. Cystine bridges form between cysteine 24–cysteine 45, cysteine 38–cysteine 62, cysteine 64–cysteine 75, and cysteine 76–cysteine 81.

This sequence belongs to the three-finger toxin family. Short-chain subfamily. Type I alpha-neurotoxin sub-subfamily. Expressed by the venom gland.

The protein localises to the secreted. Functionally, binds to muscle nicotinic acetylcholine receptor (nAChR) and inhibit acetylcholine from binding to the receptor, thereby impairing neuromuscular transmission. The protein is Short neurotoxin II of Laticauda colubrina (Yellow-lipped sea krait).